We begin with the raw amino-acid sequence, 207 residues long: Probable GTP-binding protein EngB (207 aa).

Positions 25 to 202 (DVPEIAFVGR…ATLLWQWAHP (178 aa)) constitute an EngB-type G domain. GTP-binding positions include 33–40 (GRSNAGKS), 60–64 (GRTQH), 82–85 (DLPG), 152–155 (TKAD), and 181–183 (FSA). Serine 40 and threonine 62 together coordinate Mg(2+).

The protein belongs to the TRAFAC class TrmE-Era-EngA-EngB-Septin-like GTPase superfamily. EngB GTPase family. The cofactor is Mg(2+).

Necessary for normal cell division and for the maintenance of normal septation. This Albidiferax ferrireducens (strain ATCC BAA-621 / DSM 15236 / T118) (Rhodoferax ferrireducens) protein is Probable GTP-binding protein EngB.